The primary structure comprises 656 residues: Nuclear pore complex protein Nup85 (656 aa).

An N-acetylmethionine modification is found at Met1. Lys92 is modified (N6-acetyllysine). Ser223 bears the Phosphoserine mark.

The protein belongs to the nucleoporin Nup85 family. As to quaternary structure, component of the nuclear pore complex (NPC). Component of the NPC Nup107-160 subcomplex, consisting of at least NUP107, NUP98/Nup96, NUP160, NUP133, NUP85, NUP37, NUP43 and SEC13. Interacts with NUP160, NUP133 and SEC13. Interacts with NUP37, NUP107 and NUP43. Interacts with CCR2.

The protein resides in the nucleus. It localises to the nuclear pore complex. It is found in the chromosome. Its subcellular location is the centromere. The protein localises to the kinetochore. The protein resides in the cytoplasm. It localises to the cytoskeleton. It is found in the spindle. Its subcellular location is the nucleus membrane. Functionally, essential component of the nuclear pore complex (NPC) that seems to be required for NPC assembly and maintenance. As part of the NPC Nup107-160 subcomplex plays a role in RNA export and in tethering NUP96/Nup98 and NUP153 to the nucleus. The Nup107-160 complex seems to be required for spindle assembly during mitosis. NUP85 is required for membrane clustering of CCL2-activated CCR2. Seems to be involved in CCR2-mediated chemotaxis of monocytes and may link activated CCR2 to the phosphatidyl-inositol 3-kinase-Rac-lammellipodium protrusion cascade. Involved in nephrogenesis. This is Nuclear pore complex protein Nup85 (NUP85) from Homo sapiens (Human).